The primary structure comprises 465 residues: Coumaroyl-CoA:anthocyanidin 3-O-glucoside-6''-O-coumaroyltransferase 2 (465 aa).

Position 1 is an N-acetylmethionine (methionine 1). Residues histidine 173 and aspartate 406 each act as proton acceptor in the active site.

The protein belongs to the plant acyltransferase family. As to expression, highly expressed in flowers, and leaves. Lower levels of expression in stems, roots and siliques.

In terms of biological role, involved in the acylation of the 6'' position of the 3-O-glucose residue of anthocyanin. Also able to use flavonol 3-glucosides as the acyl acceptor. The protein is Coumaroyl-CoA:anthocyanidin 3-O-glucoside-6''-O-coumaroyltransferase 2 (3AT2) of Arabidopsis thaliana (Mouse-ear cress).